Consider the following 298-residue polypeptide: Putative F-box and FNIP repeat-containing protein R286 (298 aa).

In terms of domain architecture, F-box spans 4 to 48 (LNVLESHVILHIIEFLPDHEKIKFMSTCKSLYEFRCHVTYNNFYV). FNIP repeat units follow at residues 124–165 (FNKP…LGHN) and 255–297 (WNFD…FISR).

In Acanthamoeba polyphaga (Amoeba), this protein is Putative F-box and FNIP repeat-containing protein R286.